Reading from the N-terminus, the 127-residue chain is Large ribosomal subunit protein bL17 (127 aa).

This sequence belongs to the bacterial ribosomal protein bL17 family. Part of the 50S ribosomal subunit. Contacts protein L32.

The sequence is that of Large ribosomal subunit protein bL17 from Chromohalobacter salexigens (strain ATCC BAA-138 / DSM 3043 / CIP 106854 / NCIMB 13768 / 1H11).